The following is a 443-amino-acid chain: ATP-dependent protease ATPase subunit HslU (443 aa).

ATP contacts are provided by residues isoleucine 18, 60 to 65 (GVGKTE), aspartate 256, glutamate 321, and arginine 393.

Belongs to the ClpX chaperone family. HslU subfamily. As to quaternary structure, a double ring-shaped homohexamer of HslV is capped on each side by a ring-shaped HslU homohexamer. The assembly of the HslU/HslV complex is dependent on binding of ATP.

The protein resides in the cytoplasm. Its function is as follows. ATPase subunit of a proteasome-like degradation complex; this subunit has chaperone activity. The binding of ATP and its subsequent hydrolysis by HslU are essential for unfolding of protein substrates subsequently hydrolyzed by HslV. HslU recognizes the N-terminal part of its protein substrates and unfolds these before they are guided to HslV for hydrolysis. This chain is ATP-dependent protease ATPase subunit HslU, found in Buchnera aphidicola subsp. Acyrthosiphon pisum (strain 5A).